The chain runs to 154 residues: Probable biofilm-surface layer protein B (154 aa).

The signal sequence occupies residues 1 to 30; sequence MLKRTSFVSSLFISSAVLLSILLPSGQAHA.

This sequence belongs to the BslA/BslB family. As to quaternary structure, monomer in vitro.

Its subcellular location is the secreted. In terms of biological role, has a minor role in biofilm architecture. May contribute to the surface hydrophobicity. The protein is Probable biofilm-surface layer protein B of Bacillus subtilis (strain 168).